A 132-amino-acid polypeptide reads, in one-letter code: Small ribosomal subunit protein uS8 (132 aa).

This sequence belongs to the universal ribosomal protein uS8 family. As to quaternary structure, part of the 30S ribosomal subunit. Contacts proteins S5 and S12.

One of the primary rRNA binding proteins, it binds directly to 16S rRNA central domain where it helps coordinate assembly of the platform of the 30S subunit. The chain is Small ribosomal subunit protein uS8 from Francisella tularensis subsp. tularensis (strain FSC 198).